Reading from the N-terminus, the 205-residue chain is uncharacterized protein (205 aa).

Residues 51-189 form the Nudix hydrolase domain; that stretch reads ANVDAVAILA…KKGFAIDVRL (139 aa). Positions 90-111 match the Nudix box motif; the sequence is GLVDSKESCEDAAIRELREETG.

The protein belongs to the Nudix hydrolase family.

It localises to the cytoplasm. The protein resides in the nucleus. This is an uncharacterized protein from Schizosaccharomyces pombe (strain 972 / ATCC 24843) (Fission yeast).